Consider the following 245-residue polypeptide: Orotidine 5'-phosphate decarboxylase (245 aa).

Substrate contacts are provided by residues Asp-22, Lys-44, 71–80 (DLKFHDIPNT), Thr-131, Arg-192, Gln-201, Gly-221, and Arg-222. The active-site Proton donor is Lys-73.

Belongs to the OMP decarboxylase family. Type 1 subfamily. As to quaternary structure, homodimer.

The enzyme catalyses orotidine 5'-phosphate + H(+) = UMP + CO2. The protein operates within pyrimidine metabolism; UMP biosynthesis via de novo pathway; UMP from orotate: step 2/2. Catalyzes the decarboxylation of orotidine 5'-monophosphate (OMP) to uridine 5'-monophosphate (UMP). The polypeptide is Orotidine 5'-phosphate decarboxylase (Salmonella newport (strain SL254)).